We begin with the raw amino-acid sequence, 291 residues long: uncharacterized protein (291 aa).

In terms of domain architecture, PNPLA spans 5-196 (GVFSGGGVKG…LSNFPIWLFS (192 aa)). Positions 9-14 (GGGVKG) match the GXGXXG motif. A helical transmembrane segment spans residues 34 to 50 (VAGTSAGAIIAAFIASG). Residues 36-40 (GTSAG) carry the GXSXG motif. The active-site Nucleophile is S38. D183 acts as the Proton acceptor in catalysis. The DGA/G motif lies at 183–185 (DGG).

Its subcellular location is the cell membrane. In terms of biological role, probable lipid hydrolase. This is an uncharacterized protein from Bacillus subtilis (strain 168).